The following is a 395-amino-acid chain: NADH-quinone oxidoreductase subunit D (395 aa).

The protein belongs to the complex I 49 kDa subunit family. NDH-1 is composed of 14 different subunits. Subunits NuoB, C, D, E, F, and G constitute the peripheral sector of the complex.

It is found in the cell inner membrane. The catalysed reaction is a quinone + NADH + 5 H(+)(in) = a quinol + NAD(+) + 4 H(+)(out). Functionally, NDH-1 shuttles electrons from NADH, via FMN and iron-sulfur (Fe-S) centers, to quinones in the respiratory chain. The immediate electron acceptor for the enzyme in this species is believed to be a menaquinone. Couples the redox reaction to proton translocation (for every two electrons transferred, four hydrogen ions are translocated across the cytoplasmic membrane), and thus conserves the redox energy in a proton gradient. The chain is NADH-quinone oxidoreductase subunit D from Chlorobium luteolum (strain DSM 273 / BCRC 81028 / 2530) (Pelodictyon luteolum).